We begin with the raw amino-acid sequence, 250 residues long: Peroxiredoxin (250 aa).

In terms of domain architecture, Thioredoxin spans 6–163; that stretch reads PLIGERFPEM…ILRIVKALKL (158 aa). Cys50 serves as the catalytic Cysteine sulfenic acid (-SOH) intermediate. Arg126 provides a ligand contact to substrate. Cys207 and Cys213 form a disulfide bridge.

The protein belongs to the peroxiredoxin family. Prx6 subfamily. In terms of assembly, homodecamer. Pentamer of dimers that assemble into a ring structure.

It is found in the cytoplasm. The catalysed reaction is a hydroperoxide + [thioredoxin]-dithiol = an alcohol + [thioredoxin]-disulfide + H2O. Thiol-specific peroxidase that catalyzes the reduction of hydrogen peroxide and organic hydroperoxides to water and alcohols, respectively. Plays a role in cell protection against oxidative stress by detoxifying peroxides. This chain is Peroxiredoxin, found in Aeropyrum pernix (strain ATCC 700893 / DSM 11879 / JCM 9820 / NBRC 100138 / K1).